A 291-amino-acid chain; its full sequence is Small ribosomal subunit protein uS2 (291 aa).

The disordered stretch occupies residues 255 to 291; the sequence is AGAATGEWSEAQGAQWETGTGAPAADWAAEPAKESSW.

Belongs to the universal ribosomal protein uS2 family. As to quaternary structure, component of the small ribosomal subunit. Mature ribosomes consist of a small (40S) and a large (60S) subunit. The 40S subunit contains about 33 different proteins and 1 molecule of RNA (18S). The 60S subunit contains about 49 different proteins and 3 molecules of RNA (25S, 5.8S and 5S). Interacts with RPS21.

It localises to the cytoplasm. Its function is as follows. Required for the assembly and/or stability of the 40S ribosomal subunit. Required for the processing of the 20S rRNA-precursor to mature 18S rRNA in a late step of the maturation of 40S ribosomal subunits. The protein is Small ribosomal subunit protein uS2 of Podospora anserina (strain S / ATCC MYA-4624 / DSM 980 / FGSC 10383) (Pleurage anserina).